The chain runs to 181 residues: MINSGIAKRYARAFFDIAGEDKLYEKYYEELSGFARIVQGDRNLKEFLANPVFNQAEKKAVVEAIIQKIRMSDMTTNFLKLLVDKKRIGMLAEIADYYRVLMDEVLKRVRVSVKTAFPLPADVTSDIKQGLEQMTGKQTEIVVEEDRSLLGGIVIRVGDTLYDGSIKTQLSNIRNLLGEAV.

It belongs to the ATPase delta chain family. In terms of assembly, F-type ATPases have 2 components, F(1) - the catalytic core - and F(0) - the membrane proton channel. F(1) has five subunits: alpha(3), beta(3), gamma(1), delta(1), epsilon(1). F(0) has three main subunits: a(1), b(2) and c(10-14). The alpha and beta chains form an alternating ring which encloses part of the gamma chain. F(1) is attached to F(0) by a central stalk formed by the gamma and epsilon chains, while a peripheral stalk is formed by the delta and b chains.

It localises to the cell inner membrane. In terms of biological role, f(1)F(0) ATP synthase produces ATP from ADP in the presence of a proton or sodium gradient. F-type ATPases consist of two structural domains, F(1) containing the extramembraneous catalytic core and F(0) containing the membrane proton channel, linked together by a central stalk and a peripheral stalk. During catalysis, ATP synthesis in the catalytic domain of F(1) is coupled via a rotary mechanism of the central stalk subunits to proton translocation. Functionally, this protein is part of the stalk that links CF(0) to CF(1). It either transmits conformational changes from CF(0) to CF(1) or is implicated in proton conduction. This Syntrophus aciditrophicus (strain SB) protein is ATP synthase subunit delta.